We begin with the raw amino-acid sequence, 1153 residues long: Nitric oxide synthase, inducible (1153 aa).

The DINNN-motif; mediates interaction with SPSB1, SPSB2 and SPSB4 motif lies at 23–27 (DINNN). Zn(2+) contacts are provided by Cys110 and Cys115. Residue Ser118 coordinates (6R)-L-erythro-5,6,7,8-tetrahydrobiopterin. A heme b-binding site is contributed by Cys200. Phosphoserine; by PKA is present on Ser234. L-arginine contacts are provided by Gln263, Trp372, Tyr373, and Glu377. Positions 381, 462, 463, and 476 each coordinate (6R)-L-erythro-5,6,7,8-tetrahydrobiopterin. A heme b-binding site is contributed by Tyr491. Positions 515–535 (LKVLVKAVLFACMLMRKTMAS) are calmodulin-binding. The region spanning 539–677 (VTILFATETG…AFRSWAVQTF (139 aa)) is the Flavodoxin-like domain. FMN contacts are provided by Thr545, Glu546, Thr547, Lys549, and Ser550. Position 575 is a phosphotyrosine (Tyr575). The residue at position 578 (Ser578) is a Phosphoserine; by PKA. Residues Ser591, Thr592, Ser628, Arg633, Cys635, Glu661, and Gln665 each coordinate FMN. Residues 730 to 970 (KNVFTMRLKS…VRNASGFHLP (241 aa)) enclose the FAD-binding FR-type domain. Residue Arg750 participates in NADP(+) binding. His772 lines the FAD pocket. Ser892 bears the Phosphoserine; by PKA mark. 5 residues coordinate FAD: Arg906, Tyr908, Ser909, Thr924, and Ala926. Residue Thr929 participates in NADP(+) binding. 4 residues coordinate FAD: Tyr930, Val943, Cys944, and Ser945. NADP(+) contacts are provided by Thr984, Arg1017, Ser1046, Arg1047, Lys1053, Tyr1055, Gln1057, and Asp1090.

The protein belongs to the NOS family. Homodimer. Interacts with NHERF1. Interacts with GAPDH; induced by oxidatively-modified low-densitity lipoprotein (LDL(ox)). Interacts with S100A8 and S100A9 to form the iNOS-S100A8/9 transnitrosylase complex. Interacts with SPSB1, SPSB2 and SPSB4. Interacts with ELOC and CUL5 in the presence of SPSB1 or SPSB2 or SPSB4. Forms a complex with ASL, ASS1 and HSP90AA1; the complex regulates cell-autonomous L-arginine synthesis and citrulline recycling while channeling extracellular L-arginine to nitric oxide synthesis pathway. Requires heme b as cofactor. It depends on FAD as a cofactor. FMN serves as cofactor. The cofactor is (6R)-L-erythro-5,6,7,8-tetrahydrobiopterin. In terms of processing, polyubiquitinated; mediated by SPSB1, SPSB2 and SPSB4, leading to proteasomal degradation. As to expression, expressed in the liver, retina, bone cells and airway epithelial cells of the lung. Not expressed in the platelets. Expressed in chondrocytes.

It is found in the cytoplasm. The protein resides in the cytosol. The enzyme catalyses 2 L-arginine + 3 NADPH + 4 O2 + H(+) = 2 L-citrulline + 2 nitric oxide + 3 NADP(+) + 4 H2O. With respect to regulation, regulated by calcium/calmodulin. Aspirin inhibits expression and function of this enzyme and effects may be exerted at the level of translational/post-translational modification and directly on the catalytic activity. Functionally, produces nitric oxide (NO) which is a messenger molecule with diverse functions throughout the body. In macrophages, NO mediates tumoricidal and bactericidal actions. Also has nitrosylase activity and mediates cysteine S-nitrosylation of cytoplasmic target proteins such PTGS2/COX2. As component of the iNOS-S100A8/9 transnitrosylase complex involved in the selective inflammatory stimulus-dependent S-nitrosylation of GAPDH on 'Cys-247' implicated in regulation of the GAIT complex activity and probably multiple targets including ANXA5, EZR, MSN and VIM. Involved in inflammation, enhances the synthesis of pro-inflammatory mediators such as IL6 and IL8. This is Nitric oxide synthase, inducible from Homo sapiens (Human).